The sequence spans 1484 residues: Chromosome partition protein MukB (1484 aa).

Residue 34 to 41 (GGNGAGKS) coordinates ATP. 6 coiled-coil regions span residues 338–415 (NLVQ…RAIQ), 496–604 (QTAR…ALAW), 781–805 (AARE…ATLS), 835–868 (EAEM…HYDQ), 903–1115 (HDAQ…SAKA), and 1206–1265 (DDPV…LQAV). A flexible hinge region spans residues 666 to 783 (PGGTDDARLT…AVPLFGRAAR (118 aa)).

Belongs to the SMC family. MukB subfamily. In terms of assembly, homodimerization via its hinge domain. Binds to DNA via its C-terminal region. Interacts, and probably forms a ternary complex, with MukE and MukF via its C-terminal region. The complex formation is stimulated by calcium or magnesium. Interacts with tubulin-related protein FtsZ.

The protein localises to the cytoplasm. It is found in the nucleoid. In terms of biological role, plays a central role in chromosome condensation, segregation and cell cycle progression. Functions as a homodimer, which is essential for chromosome partition. Involved in negative DNA supercoiling in vivo, and by this means organize and compact chromosomes. May achieve or facilitate chromosome segregation by condensation DNA from both sides of a centrally located replisome during cell division. This is Chromosome partition protein MukB from Sodalis glossinidius (strain morsitans).